A 198-amino-acid chain; its full sequence is Na(+)-translocating NADH-quinone reductase subunit E (198 aa).

The next 6 membrane-spanning stretches (helical) occupy residues 11-31 (SIFI…FLAV), 39-59 (FGLG…NNLV), 77-97 (FLNF…LEMV), 110-130 (GIFL…SFMV), 140-160 (IVYG…LAGI), and 176-196 (LGIT…FSGV).

Belongs to the NqrDE/RnfAE family. In terms of assembly, composed of six subunits; NqrA, NqrB, NqrC, NqrD, NqrE and NqrF. The N-terminus is blocked.

It is found in the cell inner membrane. The catalysed reaction is a ubiquinone + n Na(+)(in) + NADH + H(+) = a ubiquinol + n Na(+)(out) + NAD(+). Its activity is regulated as follows. This reaction is tightly coupled to the Na(+) pumping activity and specifically requires Na(+) for activity. Inhibited by korormicin and 2-N-heptyl-4-hydroxyquinoline N-oxide (HQNO). In terms of biological role, NQR complex catalyzes the reduction of ubiquinone-1 to ubiquinol by two successive reactions, coupled with the transport of Na(+) ions from the cytoplasm to the periplasm. NqrA to NqrE are probably involved in the second step, the conversion of ubisemiquinone to ubiquinol. The protein is Na(+)-translocating NADH-quinone reductase subunit E of Vibrio alginolyticus.